Consider the following 165-residue polypeptide: Large ribosomal subunit protein uL10 (165 aa).

Belongs to the universal ribosomal protein uL10 family. In terms of assembly, part of the ribosomal stalk of the 50S ribosomal subunit. The N-terminus interacts with L11 and the large rRNA to form the base of the stalk. The C-terminus forms an elongated spine to which L12 dimers bind in a sequential fashion forming a multimeric L10(L12)X complex.

Its function is as follows. Forms part of the ribosomal stalk, playing a central role in the interaction of the ribosome with GTP-bound translation factors. The polypeptide is Large ribosomal subunit protein uL10 (Borrelia turicatae (strain 91E135)).